The following is a 740-amino-acid chain: N-acetylated-alpha-linked acidic dipeptidase 2 (740 aa).

Residues 1-7 lie on the Cytoplasmic side of the membrane; the sequence is MARPRHL. The chain crosses the membrane as a helical; Signal-anchor for type II membrane protein span at residues 8 to 31; it reads RGLGMCITAVLASFIAGFTVGWFI. The Extracellular portion of the chain corresponds to 32-740; it reads KPLKETTTSA…AAAGTLTNVL (709 aa). N-linked (GlcNAc...) asparagine glycosylation is found at N111, N143, and N185. The substrate site is built by R200 and N247. Ca(2+) is bound by residues T259 and Y262. Positions 264 to 577 are NAALADase; the sequence is AKEYTFRLPV…QLRGALVYEL (314 aa). A glycan (N-linked (GlcNAc...) asparagine) is linked at N314. Residues H367 and D377 each contribute to the Zn(2+) site. Substrate is bound at residue E414. E414 acts as the Nucleophile; for NAALADase activity in catalysis. E415 contacts Zn(2+). Ca(2+)-binding residues include E423 and E426. Zn(2+) is bound at residue D443. Residue N449 is glycosylated (N-linked (GlcNAc...) asparagine). Residues 507-508, 524-526, Y542, and 542-543 contribute to the substrate site; these read SG, RAR, and YH. Zn(2+) is bound at residue H543. A glycan (N-linked (GlcNAc...) asparagine) is linked at N603. The active-site Charge relay system is the S618. N-linked (GlcNAc...) asparagine glycosylation is present at N628. Residues D656 and H679 each act as charge relay system in the active site. 689-690 serves as a coordination point for substrate; that stretch reads KY.

The protein belongs to the peptidase M28 family. M28B subfamily. In terms of assembly, homodimer. Zn(2+) serves as cofactor. Expressed ovary, testes and lung, but not brain.

The protein localises to the cell membrane. The catalysed reaction is Release of an unsubstituted, C-terminal glutamyl residue, typically from Ac-Asp-Glu or folylpoly-gamma-glutamates.. Its function is as follows. Has N-acetylated-alpha-linked-acidic dipeptidase (NAALADase) activity. Also exhibits a dipeptidyl-peptidase IV type activity. Inactivates the peptide neurotransmitter N-acetylaspartylglutamate. The protein is N-acetylated-alpha-linked acidic dipeptidase 2 (Naalad2) of Mus musculus (Mouse).